Here is a 385-residue protein sequence, read N- to C-terminus: DNA double-strand break repair protein Mre11 (385 aa).

3 residues coordinate Mn(2+): aspartate 14, histidine 16, and aspartate 58. The active-site Proton donor is histidine 94. Mn(2+)-binding residues include histidine 180, histidine 216, and histidine 218.

This sequence belongs to the MRE11/RAD32 family. Homodimer. Forms a heterotetramer composed of two Mre11 subunits and two Rad50 subunits. Homodimerization facilitates DNA binding. It depends on Mn(2+) as a cofactor.

Its activity is regulated as follows. Nuclease activity is regulated by Rad50. The mirin-derivative PFM39, specifically inhibits the 3'-5' exonuclease activity. The N-alkylated mirin-derivatives PFM03 and PFM01 specifically inhibit the endonuclease activity. Part of the Rad50/Mre11 complex, which is involved in the early steps of DNA double-strand break (DSB) repair. The complex may facilitate opening of the processed DNA ends to aid in the recruitment of HerA and NurA. Mre11 binds to DSB ends and has both double-stranded 3'-5' exonuclease activity and single-stranded endonuclease activity. In Thermotoga maritima (strain ATCC 43589 / DSM 3109 / JCM 10099 / NBRC 100826 / MSB8), this protein is DNA double-strand break repair protein Mre11.